The sequence spans 361 residues: MFSSVAHLARANPFNTPHLQLVHDGLGDFRSRPPGPTGQPRRPRNLAAAAVEEYSCEFGSAKYYALCGFGGVLSCGLTHTAVVPLDLVKCRMQVDPQKYKGIFNGFSVTLKEDGVRGLAKGWAPTFLGYSMQGLCKFGFYEVFKVLYSNMLGEENTYLWRTSLYLAASASAEFFADIALAPMEAAKVRIQTQPGYANTLRDAAPKMYKEEGLKAFYKGVAPLWMRQIPYTMMKFACFERTVEALYKFVVPKPRSECSKPEQLVVTFVAGYIAGVFCAIVSHPADSVVSVLNKEKGSSASLVLKRLGFKGVWKGLFARIIMIGTLTALQWFIYDSVKVYFRLPRPPPPEMPESLKKKLGLTQ.

The N-terminal 49 residues, 1 to 49 (MFSSVAHLARANPFNTPHLQLVHDGLGDFRSRPPGPTGQPRRPRNLAAA), are a transit peptide targeting the mitochondrion. Residues 25–44 (GLGDFRSRPPGPTGQPRRPR) are disordered. The Mitochondrial intermembrane portion of the chain corresponds to 50 to 62 (AVEEYSCEFGSAK). 3 Solcar repeats span residues 62-146 (KYYA…FKVL), 159-243 (WRTS…TVEA), and 260-338 (EQLV…VKVY). A helical membrane pass occupies residues 63 to 85 (YYALCGFGGVLSCGLTHTAVVPL). The Mitochondrial matrix portion of the chain corresponds to 86 to 120 (DLVKCRMQVDPQKYKGIFNGFSVTLKEDGVRGLAK). At Lys-98 the chain carries N6-acetyllysine. Lys-111 carries the N6-methyllysine modification. A helical transmembrane segment spans residues 121–140 (GWAPTFLGYSMQGLCKFGFY). At 141 to 160 (EVFKVLYSNMLGEENTYLWR) the chain is on the mitochondrial intermembrane side. The chain crosses the membrane as a helical span at residues 161–182 (TSLYLAASASAEFFADIALAPM). Over 183–217 (EAAKVRIQTQPGYANTLRDAAPKMYKEEGLKAFYK) the chain is Mitochondrial matrix. Position 195 is a phosphotyrosine (Tyr-195). Residue Lys-208 is modified to N6-acetyllysine. The helical transmembrane segment at 218-237 (GVAPLWMRQIPYTMMKFACF) threads the bilayer. Residues 238 to 260 (ERTVEALYKFVVPKPRSECSKPE) are Mitochondrial intermembrane-facing. The chain crosses the membrane as a helical span at residues 261–283 (QLVVTFVAGYIAGVFCAIVSHPA). The Mitochondrial matrix segment spans residues 284 to 313 (DSVVSVLNKEKGSSASLVLKRLGFKGVWKG). Residues 314–332 (LFARIIMIGTLTALQWFIY) traverse the membrane as a helical segment. The Mitochondrial intermembrane portion of the chain corresponds to 333 to 361 (DSVKVYFRLPRPPPPEMPESLKKKLGLTQ).

Belongs to the mitochondrial carrier (TC 2.A.29) family. Interacts with PPIF; the interaction is impaired by CsA.

It is found in the mitochondrion inner membrane. It carries out the reaction phosphate(in) + H(+)(in) = phosphate(out) + H(+)(out). Functionally, inorganic ion transporter that transports phosphate or copper ions across the mitochondrial inner membrane into the matrix compartment. Mediates proton-coupled symport of phosphate ions necessary for mitochondrial oxidative phosphorylation of ADP to ATP. Transports copper ions probably in the form of anionic copper(I) complexes to maintain mitochondrial matrix copper pool and to supply copper for cytochrome C oxidase complex assembly. May also play a role in regulation of the mitochondrial permeability transition pore (mPTP). This is Solute carrier family 25 member 3 from Pongo abelii (Sumatran orangutan).